The sequence spans 258 residues: Tryptophan synthase alpha chain (258 aa).

Catalysis depends on proton acceptor residues Glu-47 and Asp-58.

The protein belongs to the TrpA family. As to quaternary structure, tetramer of two alpha and two beta chains.

The enzyme catalyses (1S,2R)-1-C-(indol-3-yl)glycerol 3-phosphate + L-serine = D-glyceraldehyde 3-phosphate + L-tryptophan + H2O. The protein operates within amino-acid biosynthesis; L-tryptophan biosynthesis; L-tryptophan from chorismate: step 5/5. The alpha subunit is responsible for the aldol cleavage of indoleglycerol phosphate to indole and glyceraldehyde 3-phosphate. In Bacillus cereus (strain AH820), this protein is Tryptophan synthase alpha chain.